The following is a 126-amino-acid chain: Protein ApaG (126 aa).

The ApaG domain occupies 2-126 (SDTQHQVNVR…FRLAVPGALH (125 aa)).

In Pseudomonas paraeruginosa (strain DSM 24068 / PA7) (Pseudomonas aeruginosa (strain PA7)), this protein is Protein ApaG.